Reading from the N-terminus, the 264-residue chain is Pyridoxine 5'-phosphate synthase (264 aa).

The segment covering 1-21 (MTDTAQILPTTLEQNPQNTSK) has biased composition (polar residues). Residues 1–22 (MTDTAQILPTTLEQNPQNTSKK) form a disordered region. Position 28 (Asn-28) interacts with 3-amino-2-oxopropyl phosphate. 30 to 31 (DH) lines the 1-deoxy-D-xylulose 5-phosphate pocket. A 3-amino-2-oxopropyl phosphate-binding site is contributed by Arg-39. Catalysis depends on His-64, which acts as the Proton acceptor. 1-deoxy-D-xylulose 5-phosphate contacts are provided by Arg-66 and His-71. Catalysis depends on Glu-91, which acts as the Proton acceptor. 1-deoxy-D-xylulose 5-phosphate is bound at residue Thr-121. His-217 acts as the Proton donor in catalysis. 3-amino-2-oxopropyl phosphate contacts are provided by residues Gly-218 and 239–240 (GH).

Belongs to the PNP synthase family. In terms of assembly, homooctamer; tetramer of dimers.

It localises to the cytoplasm. It carries out the reaction 3-amino-2-oxopropyl phosphate + 1-deoxy-D-xylulose 5-phosphate = pyridoxine 5'-phosphate + phosphate + 2 H2O + H(+). Its pathway is cofactor biosynthesis; pyridoxine 5'-phosphate biosynthesis; pyridoxine 5'-phosphate from D-erythrose 4-phosphate: step 5/5. In terms of biological role, catalyzes the complicated ring closure reaction between the two acyclic compounds 1-deoxy-D-xylulose-5-phosphate (DXP) and 3-amino-2-oxopropyl phosphate (1-amino-acetone-3-phosphate or AAP) to form pyridoxine 5'-phosphate (PNP) and inorganic phosphate. The polypeptide is Pyridoxine 5'-phosphate synthase (Psychrobacter cryohalolentis (strain ATCC BAA-1226 / DSM 17306 / VKM B-2378 / K5)).